The following is a 496-amino-acid chain: Glycerol kinase (496 aa).

Threonine 11 contributes to the ADP binding site. Threonine 11, serine 12, and serine 13 together coordinate ATP. Threonine 11 provides a ligand contact to sn-glycerol 3-phosphate. ADP is bound at residue arginine 15. Residues arginine 81, glutamate 82, tyrosine 133, and aspartate 242 each coordinate sn-glycerol 3-phosphate. Glycerol contacts are provided by arginine 81, glutamate 82, tyrosine 133, aspartate 242, and glutamine 243. Residues threonine 264 and glycine 307 each contribute to the ADP site. ATP contacts are provided by threonine 264, glycine 307, glutamine 311, and glycine 412. Residues glycine 412 and asparagine 416 each contribute to the ADP site.

This sequence belongs to the FGGY kinase family.

The enzyme catalyses glycerol + ATP = sn-glycerol 3-phosphate + ADP + H(+). It participates in polyol metabolism; glycerol degradation via glycerol kinase pathway; sn-glycerol 3-phosphate from glycerol: step 1/1. Inhibited by fructose 1,6-bisphosphate (FBP). Key enzyme in the regulation of glycerol uptake and metabolism. Catalyzes the phosphorylation of glycerol to yield sn-glycerol 3-phosphate. The chain is Glycerol kinase from Albidiferax ferrireducens (strain ATCC BAA-621 / DSM 15236 / T118) (Rhodoferax ferrireducens).